Here is a 1334-residue protein sequence, read N- to C-terminus: WASH complex subunit 2 (1334 aa).

A sufficient for interaction with WASHC3, WASHC4 and WASHC5; required for interaction with WASHC1 region spans residues 1 to 219; the sequence is MNRTSPDSER…VGSDRGSIVD (219 aa). Phosphoserine is present on residues serine 157, serine 159, serine 204, serine 205, and serine 209. Positions 201–213 are enriched in low complexity; that stretch reads GELSSEEGSVGSD. Residues 201-471 form a disordered region; the sequence is GELSSEEGSV…SKPSKTDKVK (271 aa). Acidic residues-rich tracts occupy residues 219–232 and 249–274; these read DSED…SDED and SDEE…EDIE. Serine 284 is subject to Phosphoserine. The span at 289-324 shows a compositional bias: basic and acidic residues; that stretch reads LAARIKGDISNQRKEGQTDGKPQKTVKEKKERRTPA. Residue threonine 322 is modified to Phosphothreonine. The segment at 347 to 594 is sufficient for interaction with CCDC93; the sequence is SRGGLFSNGQ…QTSSLQPQSQ (248 aa). The segment at 348 to 1334 is interaction with VPS35; that stretch reads RGGLFSNGQG…DDPLNAFGSQ (987 aa). The short motif at 358–368 is the LFa 1 element; sequence LFDDEDESDLF. The residue at position 388 (serine 388) is a Phosphoserine. 2 short sequence motifs (LFa) span residues 441 to 457 and 476 to 485; these read LFDD…NNFF and IFDDDEGDLF. Residues 442–454 are compositionally biased toward acidic residues; sequence FDDDDNDNDEDDN. The tract at residues 492–650 is disordered; sequence LPAASVSQTH…DSGATQGQEA (159 aa). Residues 513-530 are compositionally biased toward polar residues; that stretch reads LPSSKNLKLVSETKTQKG. 2 short sequence motifs (LFa) span residues 531 to 542 and 566 to 577; these read LFSDEEDSEDLF and LFGDEDEEDSLF. Phosphoserine is present on residues serine 533 and serine 538. A compositionally biased stretch (low complexity) spans 541–561; that stretch reads LFSSQSSSKPKSASLPSSQPP. Polar residues-rich tracts occupy residues 584 to 594 and 601 to 611; these read KQTSSLQPQSQ and EQPSKKTSALL. Phosphoserine occurs at positions 613 and 614. The segment covering 625 to 639 has biased composition (basic and acidic residues); that stretch reads SHTKLASDNKSKGEL. 2 consecutive short sequence motifs (LFa) follow at residues 658–670 and 686–698; these read LFED…VDLF and LFED…SSLF. The tract at residues 691 to 837 is disordered; the sequence is AESGSSLFGL…SRPKSTGVFQ (147 aa). Phosphoserine occurs at positions 723, 747, 752, 783, and 798. Residues 800–811 are compositionally biased toward acidic residues; that stretch reads FDEDEDKVEDES. Positions 818–830 are enriched in basic and acidic residues; it reads DGREKGLKTDSRP. 2 consecutive short sequence motifs (LFa) follow at residues 835 to 843 and 852 to 858; these read VFQDEELLF and DPDVDLF. 2 disordered regions span residues 862-948 and 1014-1225; these read KKIR…PSSR and AQAD…SKTH. Serine 870 and serine 873 each carry phosphoserine. An LFa 10 motif is present at residues 874-884; the sequence is LFGDDEDDDLF. Residues 894-906 are compositionally biased toward basic and acidic residues; sequence PEKKGTLKKDHPV. Residues 908-919 show a composition bias toward polar residues; it reads LKNQDPLDSTQG. The interval 932–1334 is interaction with phospholipids; sequence QDSSGLTPFK…DDPLNAFGSQ (403 aa). The span at 1023–1041 shows a compositional bias: basic residues; that stretch reads NKSRVKVRGKRRPQTRAAR. The required for interaction with F-actin-capping protein subunit alpha (CAPZA1 or CAPZA2 or CAPZA3) stretch occupies residues 1024–1042; the sequence is KSRVKVRGKRRPQTRAARR. A phosphoserine mark is found at serine 1049, serine 1067, serine 1084, and serine 1109. 3 consecutive short sequence motifs (LFa) follow at residues 1124 to 1131, 1164 to 1178, and 1194 to 1202; these read LFDSGDIF, AFPD…EDLF, and LLEDEEDLF. Residues serine 1169, serine 1172, and serine 1173 each carry the phosphoserine modification. The segment covering 1203–1225 has biased composition (basic and acidic residues); it reads ADPRGKKNERKPDSHQDSVSKTH. 3 consecutive short sequence motifs (LFa) follow at residues 1227-1233, 1255-1263, and 1283-1292; these read IFEDDIF, LFDDNIDIF, and MFDDDTDDIF. Residues 1294 to 1334 form a disordered region; sequence SGLQAKASKPKSQSAEAASEQRSEHKVASIFDDPLNAFGSQ. The span at 1297 to 1311 shows a compositional bias: low complexity; that stretch reads QAKASKPKSQSAEAA. Positions 1323–1331 match the LFa 17 motif; sequence IFDDPLNAF. Residue serine 1333 is modified to Phosphoserine.

This sequence belongs to the FAM21 family. Component of the WASH core complex also described as WASH regulatory complex (SHRC) composed of WASHC1, WASHC2, WASHC3, WASHC4 and WASHC5; in the complex interacts (via N-terminus) directly with WASHC1. The WASH core complex associates with the F-actin-capping protein dimer (formed by CAPZA1, CAPZA2 or CAPZA3 and CAPZB) in a transient or substoichiometric manner which was initially described as WASH complex. Interacts with VPS35; mediates the association with the retromer CSC complex. Interacts with FKBP15. Interacts with CCDC93, CCDC22, VPS35L; indicative for an association of the WASH core complex with the CCC and retriever complexes. Directly interacts with TBC1D23.

It localises to the early endosome membrane. The protein resides in the cell membrane. Its function is as follows. Acts as a component of the WASH core complex that functions as a nucleation-promoting factor (NPF) at the surface of endosomes, where it recruits and activates the Arp2/3 complex to induce actin polymerization, playing a key role in the fission of tubules that serve as transport intermediates during endosome sorting. Mediates the recruitment of the WASH core complex to endosome membranes via binding to phospholipids and VPS35 of the retromer CSC. Mediates the recruitment of the F-actin-capping protein dimer to the WASH core complex probably promoting localized F-actin polymerization needed for vesicle scission. Via its C-terminus binds various phospholipids, most strongly phosphatidylinositol 4-phosphate (PtdIns-(4)P), phosphatidylinositol 5-phosphate (PtdIns-(5)P) and phosphatidylinositol 3,5-bisphosphate (PtdIns-(3,5)P2). Involved in the endosome-to-plasma membrane trafficking and recycling of SNX27-retromer-dependent cargo proteins, such as GLUT1. Required for the association of DNAJC13, ENTR1, ANKRD50 with retromer CSC subunit VPS35. Required for the endosomal recruitment of CCC and retriever complexes subunits COMMD1 and CCDC93 as well as the retrievere complex subunit VPS35L. The protein is WASH complex subunit 2 of Mus musculus (Mouse).